The chain runs to 478 residues: Proline--tRNA ligase (478 aa).

The protein belongs to the class-II aminoacyl-tRNA synthetase family. ProS type 3 subfamily. Homodimer.

It is found in the cytoplasm. It carries out the reaction tRNA(Pro) + L-proline + ATP = L-prolyl-tRNA(Pro) + AMP + diphosphate. Its function is as follows. Catalyzes the attachment of proline to tRNA(Pro) in a two-step reaction: proline is first activated by ATP to form Pro-AMP and then transferred to the acceptor end of tRNA(Pro). The chain is Proline--tRNA ligase from Clostridium botulinum (strain Okra / Type B1).